Reading from the N-terminus, the 465-residue chain is Cysteine--tRNA ligase (465 aa).

Cysteine 30 lines the Zn(2+) pocket. Positions 32 to 42 (ITVYDYCHVGH) match the 'HIGH' region motif. Positions 214, 239, and 243 each coordinate Zn(2+). Positions 271-275 (KMSKS) match the 'KMSKS' region motif. Lysine 274 provides a ligand contact to ATP.

This sequence belongs to the class-I aminoacyl-tRNA synthetase family. Monomer. The cofactor is Zn(2+).

The protein resides in the cytoplasm. It carries out the reaction tRNA(Cys) + L-cysteine + ATP = L-cysteinyl-tRNA(Cys) + AMP + diphosphate. This chain is Cysteine--tRNA ligase, found in Burkholderia ambifaria (strain MC40-6).